The primary structure comprises 746 residues: MEHTYQYSWIIPFIPLPVPILLGVGLLLFPTATKNLRRMWTFLSIFLLSIVMIFSLYLSIQQIFLSCIHQNVWSWTINNEFSFEFGYFIDPLTSIMSILITTVGILVLIYSDNYMSHDQGYLRFFAYMGFFNTSMLGLVTSSNLIQVYFFWELVGMCSYLLIGFWFTRPIAANACQKAFVTNRVGDFGLLLGILGLYWITGSFEFQDLFEIFKNLILNNRVNLLFLTLCAFLLFVGPIAKSAQFPLHVWLPDAMEGPTPISALIHAATMVAAGIFLVARLLPLFIVIPSIMYIISLIGIITVLLGATLALAQKDIKRGLAYSTMSQLGYMMLALGMGSYRSALFHLITHAYSKALLFLGSGSIIHSMEAIVGYSPDKSQNMILMGGLTKHVPITKTAFLIGTLSLCGIPPLACFWSKDEILNDSLLFSPIFAIIACSTAGLTAFYMFRIYLLTFEGHLNTFFLNYSGKKSSSFYSLSLWGKEEEKKLNKNFGLVPLLTMNNTKRASFFCNKTYKISNNVRNQIFITVENFGLNTKTFYYPHESDNTILFPMLILLLFTLFIGAIGIPFNQEGIDFDILSKLFTPSINLLHKNSQNFVDWYEFLRNATFSVSIAFFGIFIAYCLYKPFYSSLLNLTLLNSFQKMNSKRIRWEKLINFVYNWSYNRGYIDAFFKTSLIESIRRLAKQTNFFDKRIIDGITNGVGITSFFVGEVTKYIGGSRISSYLFLYLSYVLIFLMILLFFYFEKF.

Transmembrane regions (helical) follow at residues 9–29 (WIIP…LLLF), 40–60 (WTFL…YLSI), 89–109 (IDPL…LVLI), 125–145 (FAYM…SNLI), 147–167 (VYFF…FWFT), 185–205 (GDFG…SFEF), 221–241 (VNLL…IAKS), 258–278 (TPIS…FLVA), 280–300 (LLPL…IGII), 327–347 (LGYM…FHLI), 354–374 (ALLF…VGYS), 396–416 (TAFL…CFWS), 425–445 (LLFS…TAFY), 547–567 (ILFP…IGIP), 608–628 (FSVS…KPFY), and 723–743 (YLFL…FFYF).

This sequence belongs to the complex I subunit 5 family. As to quaternary structure, NDH is composed of at least 16 different subunits, 5 of which are encoded in the nucleus.

It localises to the plastid. It is found in the chloroplast thylakoid membrane. It carries out the reaction a plastoquinone + NADH + (n+1) H(+)(in) = a plastoquinol + NAD(+) + n H(+)(out). The enzyme catalyses a plastoquinone + NADPH + (n+1) H(+)(in) = a plastoquinol + NADP(+) + n H(+)(out). In terms of biological role, NDH shuttles electrons from NAD(P)H:plastoquinone, via FMN and iron-sulfur (Fe-S) centers, to quinones in the photosynthetic chain and possibly in a chloroplast respiratory chain. The immediate electron acceptor for the enzyme in this species is believed to be plastoquinone. Couples the redox reaction to proton translocation, and thus conserves the redox energy in a proton gradient. The chain is NAD(P)H-quinone oxidoreductase subunit 5, chloroplastic (ndhF) from Olimarabidopsis pumila (Dwarf rocket).